We begin with the raw amino-acid sequence, 84 residues long: U8-theraphotoxin-Hhn1g (84 aa).

The first 21 residues, 1-21, serve as a signal peptide directing secretion; that stretch reads MKVVLLVCLVWMMAMMELVSC. 5 disulfide bridges follow: Cys23/Cys35, Cys29/Cys44, Cys34/Cys67, Cys54/Cys75, and Cys69/Cys81.

The protein belongs to the AVIT (prokineticin) family. Expressed by the venom gland.

It localises to the secreted. The sequence is that of U8-theraphotoxin-Hhn1g from Cyriopagopus hainanus (Chinese bird spider).